The primary structure comprises 246 residues: Probable transcriptional regulatory protein ESA_01378 (246 aa).

The protein belongs to the TACO1 family.

The protein resides in the cytoplasm. The protein is Probable transcriptional regulatory protein ESA_01378 of Cronobacter sakazakii (strain ATCC BAA-894) (Enterobacter sakazakii).